The following is a 254-amino-acid chain: Ribonuclease 3 (254 aa).

One can recognise an RNase III domain in the interval 24–154; the sequence is LRRLQETLGV…VIGALFLDSG (131 aa). Glutamate 67 lines the Mg(2+) pocket. Aspartate 71 is a catalytic residue. Mg(2+) contacts are provided by aspartate 140 and glutamate 143. Glutamate 143 is an active-site residue. A DRBM domain is found at 181 to 250; that stretch reads DYKSTLQVLA…ARLAWEQLSG (70 aa).

It belongs to the ribonuclease III family. As to quaternary structure, homodimer. Mg(2+) is required as a cofactor.

The protein resides in the cytoplasm. It carries out the reaction Endonucleolytic cleavage to 5'-phosphomonoester.. Its function is as follows. Digests double-stranded RNA. Involved in the processing of primary rRNA transcript to yield the immediate precursors to the large and small rRNAs (23S and 16S). Processes some mRNAs, and tRNAs when they are encoded in the rRNA operon. Processes pre-crRNA and tracrRNA of type II CRISPR loci if present in the organism. This chain is Ribonuclease 3, found in Treponema pallidum (strain Nichols).